A 443-amino-acid polypeptide reads, in one-letter code: uncharacterized protein (443 aa).

Positions 1-21 (MQSVTPPPTQQGKPDPTNSDM) are disordered. The span at 10 to 20 (QQGKPDPTNSD) shows a compositional bias: polar residues.

This is an uncharacterized protein from Caenorhabditis elegans.